The chain runs to 87 residues: Exodeoxyribonuclease 7 small subunit (87 aa).

It belongs to the XseB family. Heterooligomer composed of large and small subunits.

It is found in the cytoplasm. It catalyses the reaction Exonucleolytic cleavage in either 5'- to 3'- or 3'- to 5'-direction to yield nucleoside 5'-phosphates.. Functionally, bidirectionally degrades single-stranded DNA into large acid-insoluble oligonucleotides, which are then degraded further into small acid-soluble oligonucleotides. The sequence is that of Exodeoxyribonuclease 7 small subunit from Serratia proteamaculans (strain 568).